The sequence spans 68 residues: Large ribosomal subunit protein uL29 (68 aa).

This sequence belongs to the universal ribosomal protein uL29 family.

The protein is Large ribosomal subunit protein uL29 of Picosynechococcus sp. (strain ATCC 27264 / PCC 7002 / PR-6) (Agmenellum quadruplicatum).